The primary structure comprises 363 residues: UDP-N-acetylglucosamine--N-acetylmuramyl-(pentapeptide) pyrophosphoryl-undecaprenol N-acetylglucosamine transferase (363 aa).

Residues 10-12 (TGG), asparagine 124, serine 195, isoleucine 250, and glutamine 295 each bind UDP-N-acetyl-alpha-D-glucosamine.

Belongs to the glycosyltransferase 28 family. MurG subfamily.

The protein localises to the cell membrane. The catalysed reaction is Mur2Ac(oyl-L-Ala-gamma-D-Glu-L-Lys-D-Ala-D-Ala)-di-trans,octa-cis-undecaprenyl diphosphate + UDP-N-acetyl-alpha-D-glucosamine = beta-D-GlcNAc-(1-&gt;4)-Mur2Ac(oyl-L-Ala-gamma-D-Glu-L-Lys-D-Ala-D-Ala)-di-trans,octa-cis-undecaprenyl diphosphate + UDP + H(+). Its pathway is cell wall biogenesis; peptidoglycan biosynthesis. Functionally, cell wall formation. Catalyzes the transfer of a GlcNAc subunit on undecaprenyl-pyrophosphoryl-MurNAc-pentapeptide (lipid intermediate I) to form undecaprenyl-pyrophosphoryl-MurNAc-(pentapeptide)GlcNAc (lipid intermediate II). The polypeptide is UDP-N-acetylglucosamine--N-acetylmuramyl-(pentapeptide) pyrophosphoryl-undecaprenol N-acetylglucosamine transferase (Lactiplantibacillus plantarum (strain ATCC BAA-793 / NCIMB 8826 / WCFS1) (Lactobacillus plantarum)).